Consider the following 78-residue polypeptide: Gas vesicle protein G (78 aa).

The protein belongs to the gas vesicle GvpG family.

The protein resides in the gas vesicle. Functionally, might be a minor component of the gas vesicle involved in nucleating their formation. Gas vesicles are hollow, gas filled proteinaceous nanostructures found in some microorganisms. It is not clear what function gas vesicles perform in soil bacteria. This chain is Gas vesicle protein G, found in Streptomyces sp. (strain CB03234).